We begin with the raw amino-acid sequence, 287 residues long: Alpha-tubulin N-acetyltransferase 2 (287 aa).

The region spanning 2-193 (VEFAFDIKHL…NNFVLYEGFF (192 aa)) is the N-acetyltransferase domain. Residues 127-140 (FYVHESRQRCGQGK) and 163-172 (SNKMLAFMAK) each bind acetyl-CoA.

The protein belongs to the acetyltransferase ATAT1 family.

It localises to the midbody. Its subcellular location is the midbody ring. The catalysed reaction is L-lysyl-[alpha-tubulin] + acetyl-CoA = N(6)-acetyl-L-lysyl-[alpha-tubulin] + CoA + H(+). Functionally, specifically acetylates 'Lys-40' in alpha-tubulin on the lumenal side of microtubules. Promotes microtubule destabilization and accelerates microtubule dynamics; this activity may be independent of acetylation activity. Acetylates alpha-tubulin with a slow enzymatic rate, due to a catalytic site that is not optimized for acetyl transfer. Enters the microtubule through each end and diffuses quickly throughout the lumen of microtubules. Acetylates only long/old microtubules because of its slow acetylation rate since it does not have time to act on dynamically unstable microtubules before the enzyme is released. Main acetyltransferase responsible for alpha-tubulin 'Lys-40' acetylation in germline cells during the early stages of oogenesis. Required for normal egg chamber separation. This Drosophila melanogaster (Fruit fly) protein is Alpha-tubulin N-acetyltransferase 2.